We begin with the raw amino-acid sequence, 453 residues long: O-methyltransferase bik3 (453 aa).

Residues 1 to 25 form a disordered region; sequence MVSNGISNGTNGTNGTTTNGTNGVN. Residues 8–25 are compositionally biased toward low complexity; it reads NGTNGTNGTTTNGTNGVN. Asp305 serves as a coordination point for S-adenosyl-L-methionine. His355 serves as the catalytic Proton acceptor.

Belongs to the class I-like SAM-binding methyltransferase superfamily. Cation-independent O-methyltransferase family. COMT subfamily.

It participates in secondary metabolite biosynthesis. In terms of biological role, O-methyltransferase; part of the gene cluster that mediates the biosynthesis of bikaverin, a red pigment also considered as a mycotoxin. The first stage is catalyzed by the polyketide synthase bik1, which catalyzes the formation of the intermediate SMA76a also knowm as pre-bikaverin. FAD-dependent monooxygenase bik2 might then be responsible for the oxidation of pre-bikaverin to oxo-pre-bikaverin which is in turn methylated by the O-methyltransferase bik3 to me-oxo-pre-bikaverin. A further cycle of oxydation and methylation by bik2 and bik3 leads to the final product of bikaverin, via a nor-bikaverin intermediate. The polypeptide is O-methyltransferase bik3 (Gibberella fujikuroi (strain CBS 195.34 / IMI 58289 / NRRL A-6831) (Bakanae and foot rot disease fungus)).